We begin with the raw amino-acid sequence, 880 residues long: Alanine--tRNA ligase (880 aa).

The protein belongs to the class-II aminoacyl-tRNA synthetase family.

The protein resides in the cytoplasm. The catalysed reaction is tRNA(Ala) + L-alanine + ATP = L-alanyl-tRNA(Ala) + AMP + diphosphate. Its function is as follows. Catalyzes the attachment of alanine to tRNA(Ala) in a two-step reaction: alanine is first activated by ATP to form Ala-AMP and then transferred to the acceptor end of tRNA(Ala). Also edits incorrectly charged Ser-tRNA(Ala) and Gly-tRNA(Ala) via its editing domain. The chain is Alanine--tRNA ligase (alaS) from Lactiplantibacillus plantarum (strain ATCC BAA-793 / NCIMB 8826 / WCFS1) (Lactobacillus plantarum).